The chain runs to 373 residues: Dynein regulatory complex protein 9 (373 aa).

The stretch at 145-200 forms a coiled coil; that stretch reads EQAMKETIEREKNTTAAVRQLRNDLREEKLDHEEKMKEKKKGLSTLKEQLKALKMD. The 30-residue stretch at 336–365 folds into the IQ domain; it reads RAQAAVIIQAWWRGHKVRMVMSGGGKKGAK.

Belongs to the DRC9 family. Component of the nexin-dynein regulatory complex (N-DRC).

It is found in the cytoplasm. Its subcellular location is the cytoskeleton. The protein resides in the flagellum axoneme. Component of the nexin-dynein regulatory complex (N-DRC), a key regulator of ciliary/flagellar motility which maintains the alignment and integrity of the distal axoneme and regulates microtubule sliding in motile axonemes. The polypeptide is Dynein regulatory complex protein 9 (Chlamydomonas reinhardtii (Chlamydomonas smithii)).